The chain runs to 484 residues: Trigger factor (484 aa).

Residues 162-243 (GDFISIDLSA…VKSVKERELP (82 aa)) form the PPIase FKBP-type domain. The tract at residues 427 to 484 (DGNTIDTSEFFGKPPENDVTDLLDDDADGDAGVDADGDTENSAEPADADSADAAQGAG) is disordered. Positions 444 to 476 (DVTDLLDDDADGDAGVDADGDTENSAEPADADS) are enriched in acidic residues.

The protein belongs to the FKBP-type PPIase family. Tig subfamily.

It localises to the cytoplasm. The catalysed reaction is [protein]-peptidylproline (omega=180) = [protein]-peptidylproline (omega=0). Involved in protein export. Acts as a chaperone by maintaining the newly synthesized protein in an open conformation. Functions as a peptidyl-prolyl cis-trans isomerase. In Mycobacterium marinum (strain ATCC BAA-535 / M), this protein is Trigger factor.